A 321-amino-acid polypeptide reads, in one-letter code: Cytochrome f (321 aa).

Residues 1–35 form the signal peptide; that stretch reads MQNTNTLNWINKLIYLSISIPIFFLILVTTYPNSV. Residues Tyr38, Cys58, Cys61, and His62 each coordinate heme. The helical transmembrane segment at 287 to 307 threads the bilayer; that stretch reads MEGLILFFISVILAQVFLVLK.

The protein belongs to the cytochrome f family. The 4 large subunits of the cytochrome b6-f complex are cytochrome b6, subunit IV (17 kDa polypeptide, petD), cytochrome f and the Rieske protein, while the 4 small subunits are PetG, PetL, PetM and PetN. The complex functions as a dimer. Heme is required as a cofactor.

It is found in the plastid. The protein resides in the chloroplast thylakoid membrane. Its function is as follows. Component of the cytochrome b6-f complex, which mediates electron transfer between photosystem II (PSII) and photosystem I (PSI), cyclic electron flow around PSI, and state transitions. The polypeptide is Cytochrome f (Chara vulgaris (Common stonewort)).